The chain runs to 250 residues: Probable transcriptional regulatory protein Emin_1151 (250 aa).

Belongs to the TACO1 family.

It is found in the cytoplasm. This is Probable transcriptional regulatory protein Emin_1151 from Elusimicrobium minutum (strain Pei191).